The sequence spans 570 residues: Double-stranded RNA-binding protein Staufen homolog 2 (570 aa).

Residues 8–75 form the DRBM 1 domain; the sequence is TPVCLVNELA…ANKALTESTL (68 aa). Disordered stretches follow at residues 71-94 and 178-203; these read TEST…PGSI and ALQN…DDKD. Residues 83 to 94 show a composition bias toward polar residues; it reads PKSNVNNNPGSI. A DRBM 2 domain is found at 95-181; the sequence is TPTVELNGLA…AMKALQALQN (87 aa). Phosphoserine is present on Ser188. Over residues 194 to 203 the composition is skewed to basic and acidic residues; it reads SGKEMDDDKD. DRBM domains are found at residues 207–274 and 307–375; these read SEIS…ELKK and NPIS…QLGY. 2 short sequence motifs (nuclear localization signal) span residues 273-291 and 373-412; these read KKLP…FKKR and LGYK…PKGI. The disordered stretch occupies residues 381 to 413; the sequence is LQDPLDKTGENKGWSGPKPGFPEPTNNTPKGIL. Residues 381-570 form a required for dendritic transport region; that stretch reads LQDPLDKTGE…QDCKKSKSAI (190 aa). A Phosphoserine modification is found at Ser395. Residue Thr405 is modified to Phosphothreonine. 5 positions are modified to phosphoserine: Ser416, Ser426, Ser440, Ser455, and Ser492. Positions 545 to 570 are disordered; the sequence is LREKADNNQAKPASISQDCKKSKSAI. Residues 551–561 are compositionally biased toward polar residues; sequence NNQAKPASISQ.

Interacts with microtubules. Isoform 2 and isoform 3 may also interact with ribosomes, and this association is independent of translation. Identified in a mRNP complex, at least composed of DHX9, DDX3X, ELAVL1, HNRNPU, IGF2BP1, ILF3, PABPC1, PCBP2, PTBP2, STAU1, STAU2, SYNCRIP and YBX1. Interacts with the exportin XPO5. This requires RNA and RAN bound to GTP. Interacts with TRIM71 (via NHL repeats) in an RNA-dependent manner. As to expression, expressed in brain and neurons, where isoform 2 and isoform 3 appear to be the most abundant. Expressed at the neuromuscular junction of the extensor digitorum longus, tibialis anterior and soleus muscles. Expression at neuromuscular junctions is most pronounced in slow-twitch muscle. Also weakly expressed in heart, kidney, ovary and testis.

It localises to the cytoplasm. The protein resides in the nucleus. It is found in the nucleolus. Its subcellular location is the endoplasmic reticulum. RNA-binding protein required for the microtubule-dependent transport of neuronal RNA from the cell body to the dendrite. As protein synthesis occurs within the dendrite, the localization of specific mRNAs to dendrites may be a prerequisite for neurite outgrowth and plasticity at sites distant from the cell body. The protein is Double-stranded RNA-binding protein Staufen homolog 2 (Stau2) of Mus musculus (Mouse).